The sequence spans 196 residues: GTP cyclohydrolase-2 (196 aa).

49-53 (RVHSE) is a binding site for GTP. Zn(2+)-binding residues include Cys54, Cys65, and Cys67. GTP contacts are provided by residues Gln70, 92–94 (EGR), and Thr114. Asp126 serves as the catalytic Proton acceptor. Arg128 (nucleophile) is an active-site residue. 2 residues coordinate GTP: Thr149 and Lys154.

The protein belongs to the GTP cyclohydrolase II family. As to quaternary structure, homodimer. Requires Zn(2+) as cofactor.

It carries out the reaction GTP + 4 H2O = 2,5-diamino-6-hydroxy-4-(5-phosphoribosylamino)-pyrimidine + formate + 2 phosphate + 3 H(+). It functions in the pathway cofactor biosynthesis; riboflavin biosynthesis; 5-amino-6-(D-ribitylamino)uracil from GTP: step 1/4. In terms of biological role, catalyzes the conversion of GTP to 2,5-diamino-6-ribosylamino-4(3H)-pyrimidinone 5'-phosphate (DARP), formate and pyrophosphate. This chain is GTP cyclohydrolase-2, found in Enterobacter sp. (strain 638).